We begin with the raw amino-acid sequence, 278 residues long: 4-deoxy-L-threo-5-hexosulose-uronate ketol-isomerase (278 aa).

Zn(2+) contacts are provided by His-196, His-198, Glu-203, and His-245.

It belongs to the KduI family. The cofactor is Zn(2+).

The enzyme catalyses 5-dehydro-4-deoxy-D-glucuronate = 3-deoxy-D-glycero-2,5-hexodiulosonate. It participates in glycan metabolism; pectin degradation; 2-dehydro-3-deoxy-D-gluconate from pectin: step 4/5. Its function is as follows. Catalyzes the isomerization of 5-dehydro-4-deoxy-D-glucuronate to 3-deoxy-D-glycero-2,5-hexodiulosonate. This chain is 4-deoxy-L-threo-5-hexosulose-uronate ketol-isomerase, found in Burkholderia cenocepacia (strain ATCC BAA-245 / DSM 16553 / LMG 16656 / NCTC 13227 / J2315 / CF5610) (Burkholderia cepacia (strain J2315)).